The sequence spans 689 residues: Glycine--tRNA ligase beta subunit (689 aa).

Belongs to the class-II aminoacyl-tRNA synthetase family. Tetramer of two alpha and two beta subunits.

Its subcellular location is the cytoplasm. The catalysed reaction is tRNA(Gly) + glycine + ATP = glycyl-tRNA(Gly) + AMP + diphosphate. This chain is Glycine--tRNA ligase beta subunit, found in Shewanella sp. (strain W3-18-1).